A 234-amino-acid polypeptide reads, in one-letter code: Leucyl/phenylalanyl-tRNA--protein transferase (234 aa).

This sequence belongs to the L/F-transferase family.

It is found in the cytoplasm. The enzyme catalyses N-terminal L-lysyl-[protein] + L-leucyl-tRNA(Leu) = N-terminal L-leucyl-L-lysyl-[protein] + tRNA(Leu) + H(+). It catalyses the reaction N-terminal L-arginyl-[protein] + L-leucyl-tRNA(Leu) = N-terminal L-leucyl-L-arginyl-[protein] + tRNA(Leu) + H(+). The catalysed reaction is L-phenylalanyl-tRNA(Phe) + an N-terminal L-alpha-aminoacyl-[protein] = an N-terminal L-phenylalanyl-L-alpha-aminoacyl-[protein] + tRNA(Phe). Functions in the N-end rule pathway of protein degradation where it conjugates Leu, Phe and, less efficiently, Met from aminoacyl-tRNAs to the N-termini of proteins containing an N-terminal arginine or lysine. In Enterobacter sp. (strain 638), this protein is Leucyl/phenylalanyl-tRNA--protein transferase.